Reading from the N-terminus, the 250-residue chain is Ribose-5-phosphate isomerase A (250 aa).

Residues 33 to 36 (TGST), 89 to 92 (DGAD), and 102 to 105 (KGGG) contribute to the substrate site. The active-site Proton acceptor is the Glu111. Lys129 serves as a coordination point for substrate.

This sequence belongs to the ribose 5-phosphate isomerase family. Homodimer.

It carries out the reaction aldehydo-D-ribose 5-phosphate = D-ribulose 5-phosphate. Its pathway is carbohydrate degradation; pentose phosphate pathway; D-ribose 5-phosphate from D-ribulose 5-phosphate (non-oxidative stage): step 1/1. Functionally, catalyzes the reversible conversion of ribose-5-phosphate to ribulose 5-phosphate. The polypeptide is Ribose-5-phosphate isomerase A (Cereibacter sphaeroides (strain ATCC 17025 / ATH 2.4.3) (Rhodobacter sphaeroides)).